Here is a 594-residue protein sequence, read N- to C-terminus: UvrABC system protein C (594 aa).

Residues 14 to 91 (DQPGCYLMKD…IKKYDPKYNI (78 aa)) form the GIY-YIG domain. Residues 196–231 (KEVRSELEIKMYEASEKLEFERAKELRDQIAHIDAI) enclose the UVR domain.

The protein belongs to the UvrC family. In terms of assembly, interacts with UvrB in an incision complex.

The protein resides in the cytoplasm. In terms of biological role, the UvrABC repair system catalyzes the recognition and processing of DNA lesions. UvrC both incises the 5' and 3' sides of the lesion. The N-terminal half is responsible for the 3' incision and the C-terminal half is responsible for the 5' incision. This Bacillus cereus (strain B4264) protein is UvrABC system protein C.